The following is a 317-amino-acid chain: MFQPLSSKPSFPHRHLLGIAGLSAQDLTILLDLAEEAIEVSRQVEKKRTSLRGRTLINLFFEASTRTQSSFELAGKRLGADVMNMSVATSSVKKGETLLDTAMTLNAMRPDIIVVRHAQAGAVHLLAREVDCSVVNAGDGAHEHPTQALLDALTIRRNKGRIEGLIVAICGDILHSRVARSNILSLSALGARVRVIGPSTLLPTGIEQMGVEVFRDMREGLVGADIVMMLRLQRERMDGGFIPSLKEYFRFYGLDEEKLALARPDALVMHPGPMNRGVEIASRVADGPQSRIREQVEMGVAVRMAVLEALSQHLPNG.

The carbamoyl phosphate site is built by R66 and T67. An L-aspartate-binding site is contributed by K94. Residues R116, H144, and Q147 each coordinate carbamoyl phosphate. The L-aspartate site is built by R177 and R231. Carbamoyl phosphate contacts are provided by G272 and P273.

This sequence belongs to the aspartate/ornithine carbamoyltransferase superfamily. ATCase family. Heterododecamer (2C3:3R2) of six catalytic PyrB chains organized as two trimers (C3), and six regulatory PyrI chains organized as three dimers (R2).

The enzyme catalyses carbamoyl phosphate + L-aspartate = N-carbamoyl-L-aspartate + phosphate + H(+). Its pathway is pyrimidine metabolism; UMP biosynthesis via de novo pathway; (S)-dihydroorotate from bicarbonate: step 2/3. In terms of biological role, catalyzes the condensation of carbamoyl phosphate and aspartate to form carbamoyl aspartate and inorganic phosphate, the committed step in the de novo pyrimidine nucleotide biosynthesis pathway. The polypeptide is Aspartate carbamoyltransferase catalytic subunit (Beijerinckia indica subsp. indica (strain ATCC 9039 / DSM 1715 / NCIMB 8712)).